We begin with the raw amino-acid sequence, 66 residues long: Photosystem II reaction center protein H (66 aa).

Residues G27–L47 form a helical membrane-spanning segment.

It belongs to the PsbH family. In terms of assembly, PSII is composed of 1 copy each of membrane proteins PsbA, PsbB, PsbC, PsbD, PsbE, PsbF, PsbH, PsbI, PsbJ, PsbK, PsbL, PsbM, PsbT, PsbX, PsbY, Psb30/Ycf12, peripheral proteins PsbO, CyanoQ (PsbQ), PsbU, PsbV and a large number of cofactors. It forms dimeric complexes.

Its subcellular location is the cellular thylakoid membrane. In terms of biological role, one of the components of the core complex of photosystem II (PSII), required for its stability and/or assembly. PSII is a light-driven water:plastoquinone oxidoreductase that uses light energy to abstract electrons from H(2)O, generating O(2) and a proton gradient subsequently used for ATP formation. It consists of a core antenna complex that captures photons, and an electron transfer chain that converts photonic excitation into a charge separation. In Prochlorococcus marinus (strain MIT 9215), this protein is Photosystem II reaction center protein H.